We begin with the raw amino-acid sequence, 256 residues long: Hydroxyacylglutathione hydrolase (256 aa).

7 residues coordinate Zn(2+): histidine 57, histidine 59, aspartate 61, histidine 62, histidine 115, aspartate 134, and histidine 172.

Belongs to the metallo-beta-lactamase superfamily. Glyoxalase II family. In terms of assembly, monomer. The cofactor is Zn(2+).

The catalysed reaction is an S-(2-hydroxyacyl)glutathione + H2O = a 2-hydroxy carboxylate + glutathione + H(+). Its pathway is secondary metabolite metabolism; methylglyoxal degradation; (R)-lactate from methylglyoxal: step 2/2. In terms of biological role, thiolesterase that catalyzes the hydrolysis of S-D-lactoyl-glutathione to form glutathione and D-lactic acid. This is Hydroxyacylglutathione hydrolase from Maricaulis maris (strain MCS10) (Caulobacter maris).